Here is a 108-residue protein sequence, read N- to C-terminus: NADH dehydrogenase [ubiquinone] 1 alpha subcomplex subunit 8-A (108 aa).

CHCH domains follow at residues 28-69 and 70-108; these read GIRC…LKDL and HQRC…CPLK. 3 short sequence motifs (cx9C motif) span residues 31–41, 51–61, and 73–83; these read CMPENMAFLKC, CLEKGRDVTRC, and CPKEMDAYVGC. Intrachain disulfides connect Cys-31-Cys-61, Cys-41-Cys-51, Cys-73-Cys-105, and Cys-83-Cys-94. The Cx10C motif signature appears at 94 to 105; the sequence is CRKEQEAFEKVC.

The protein belongs to the complex I NDUFA8 subunit family. As to quaternary structure, complex I is composed of at least 49 different subunits.

The protein resides in the mitochondrion. It localises to the mitochondrion intermembrane space. In terms of biological role, accessory subunit of the mitochondrial membrane respiratory chain NADH dehydrogenase (Complex I), that is believed not to be involved in catalysis. Complex I functions in the transfer of electrons from NADH to the respiratory chain. The immediate electron acceptor for the enzyme is believed to be ubiquinone. The polypeptide is NADH dehydrogenase [ubiquinone] 1 alpha subcomplex subunit 8-A (Arabidopsis thaliana (Mouse-ear cress)).